The chain runs to 488 residues: Cysteine--tRNA ligase (488 aa).

Position 40 (cysteine 40) interacts with Zn(2+). A 'HIGH' region motif is present at residues 42–52 (MTVYDYCHIGH). Positions 221, 246, and 250 each coordinate Zn(2+). The short motif at 278–282 (KMSKS) is the 'KMSKS' region element. Lysine 281 provides a ligand contact to ATP.

Belongs to the class-I aminoacyl-tRNA synthetase family. As to quaternary structure, monomer. Zn(2+) serves as cofactor.

Its subcellular location is the cytoplasm. The enzyme catalyses tRNA(Cys) + L-cysteine + ATP = L-cysteinyl-tRNA(Cys) + AMP + diphosphate. The sequence is that of Cysteine--tRNA ligase from Psychrobacter cryohalolentis (strain ATCC BAA-1226 / DSM 17306 / VKM B-2378 / K5).